A 279-amino-acid chain; its full sequence is Thymidylate synthase (279 aa).

133 to 134 (RR) contributes to the dUMP binding site. Catalysis depends on C154, which acts as the Nucleophile. Residues 178 to 181 (RSND), N189, and 219 to 221 (HIY) contribute to the dUMP site. (6R)-5,10-methylene-5,6,7,8-tetrahydrofolate is bound at residue D181. A278 contacts (6R)-5,10-methylene-5,6,7,8-tetrahydrofolate.

This sequence belongs to the thymidylate synthase family. Bacterial-type ThyA subfamily. As to quaternary structure, homodimer.

The protein localises to the cytoplasm. It carries out the reaction dUMP + (6R)-5,10-methylene-5,6,7,8-tetrahydrofolate = 7,8-dihydrofolate + dTMP. It participates in pyrimidine metabolism; dTTP biosynthesis. Functionally, catalyzes the reductive methylation of 2'-deoxyuridine-5'-monophosphate (dUMP) to 2'-deoxythymidine-5'-monophosphate (dTMP) while utilizing 5,10-methylenetetrahydrofolate (mTHF) as the methyl donor and reductant in the reaction, yielding dihydrofolate (DHF) as a by-product. This enzymatic reaction provides an intracellular de novo source of dTMP, an essential precursor for DNA biosynthesis. In Streptococcus suis (strain 05ZYH33), this protein is Thymidylate synthase.